Here is a 427-residue protein sequence, read N- to C-terminus: Glutamate-1-semialdehyde 2,1-aminomutase (427 aa).

Lys263 is modified (N6-(pyridoxal phosphate)lysine).

The protein belongs to the class-III pyridoxal-phosphate-dependent aminotransferase family. HemL subfamily. As to quaternary structure, homodimer. Pyridoxal 5'-phosphate is required as a cofactor.

The protein localises to the cytoplasm. It catalyses the reaction (S)-4-amino-5-oxopentanoate = 5-aminolevulinate. The protein operates within porphyrin-containing compound metabolism; protoporphyrin-IX biosynthesis; 5-aminolevulinate from L-glutamyl-tRNA(Glu): step 2/2. The sequence is that of Glutamate-1-semialdehyde 2,1-aminomutase from Caldicellulosiruptor saccharolyticus (strain ATCC 43494 / DSM 8903 / Tp8T 6331).